A 70-amino-acid polypeptide reads, in one-letter code: Small ribosomal subunit protein bS21A (70 aa).

It belongs to the bacterial ribosomal protein bS21 family.

This chain is Small ribosomal subunit protein bS21A (rpsU1), found in Burkholderia mallei (strain ATCC 23344).